Reading from the N-terminus, the 202-residue chain is LexA repressor (202 aa).

The segment at residues Arg-28 to Lys-48 is a DNA-binding region (H-T-H motif). Active-site for autocatalytic cleavage activity residues include Ser-119 and Lys-156.

The protein belongs to the peptidase S24 family. Homodimer.

It carries out the reaction Hydrolysis of Ala-|-Gly bond in repressor LexA.. Its function is as follows. Represses a number of genes involved in the response to DNA damage (SOS response), including recA and lexA. In the presence of single-stranded DNA, RecA interacts with LexA causing an autocatalytic cleavage which disrupts the DNA-binding part of LexA, leading to derepression of the SOS regulon and eventually DNA repair. This chain is LexA repressor, found in Pectobacterium atrosepticum (strain SCRI 1043 / ATCC BAA-672) (Erwinia carotovora subsp. atroseptica).